Consider the following 99-residue polypeptide: DNA-binding protein Fis (99 aa).

The segment at residues 75 to 94 (QTRAALMLGVNRGTLRKKLK) is a DNA-binding region (H-T-H motif).

This sequence belongs to the transcriptional regulatory Fis family. Homodimer.

Functionally, activates ribosomal RNA transcription. Plays a direct role in upstream activation of rRNA promoters. The sequence is that of DNA-binding protein Fis from Actinobacillus succinogenes (strain ATCC 55618 / DSM 22257 / CCUG 43843 / 130Z).